The primary structure comprises 261 residues: ATP synthase subunit a (261 aa).

Helical transmembrane passes span 45–65 (ITNV…ILVL), 107–127 (VMTL…PLSF), 133–153 (MAVT…LGFM), 162–182 (MFWV…IEVI), 209–229 (IAGF…VTAI), and 232–252 (LELL…CVYL).

Belongs to the ATPase A chain family. In terms of assembly, F-type ATPases have 2 components, CF(1) - the catalytic core - and CF(0) - the membrane proton channel. CF(1) has five subunits: alpha(3), beta(3), gamma(1), delta(1), epsilon(1). CF(0) has four main subunits: a, b, b' and c.

The protein localises to the cell inner membrane. Functionally, key component of the proton channel; it plays a direct role in the translocation of protons across the membrane. This chain is ATP synthase subunit a, found in Cereibacter sphaeroides (strain ATCC 17025 / ATH 2.4.3) (Rhodobacter sphaeroides).